A 361-amino-acid chain; its full sequence is Holliday junction branch migration complex subunit RuvB (361 aa).

Residues 1–183 (MAEPSLVAAG…FGFTGHLEFY (183 aa)) form a large ATPase domain (RuvB-L) region. ATP is bound by residues L22, R23, G64, K67, T68, T69, 130-132 (EDF), R173, Y183, and R220. Mg(2+) is bound at residue T68. The interval 184 to 254 (SVPELELVLR…SASAALDMYE (71 aa)) is small ATPAse domain (RuvB-S). Residues 257 to 361 (KKGLDRLDRS…VTGEWAPESQ (105 aa)) are head domain (RuvB-H). R312 and R317 together coordinate DNA.

It belongs to the RuvB family. In terms of assembly, homohexamer. Forms an RuvA(8)-RuvB(12)-Holliday junction (HJ) complex. HJ DNA is sandwiched between 2 RuvA tetramers; dsDNA enters through RuvA and exits via RuvB. An RuvB hexamer assembles on each DNA strand where it exits the tetramer. Each RuvB hexamer is contacted by two RuvA subunits (via domain III) on 2 adjacent RuvB subunits; this complex drives branch migration. In the full resolvosome a probable DNA-RuvA(4)-RuvB(12)-RuvC(2) complex forms which resolves the HJ.

It is found in the cytoplasm. The catalysed reaction is ATP + H2O = ADP + phosphate + H(+). In terms of biological role, the RuvA-RuvB-RuvC complex processes Holliday junction (HJ) DNA during genetic recombination and DNA repair, while the RuvA-RuvB complex plays an important role in the rescue of blocked DNA replication forks via replication fork reversal (RFR). RuvA specifically binds to HJ cruciform DNA, conferring on it an open structure. The RuvB hexamer acts as an ATP-dependent pump, pulling dsDNA into and through the RuvAB complex. RuvB forms 2 homohexamers on either side of HJ DNA bound by 1 or 2 RuvA tetramers; 4 subunits per hexamer contact DNA at a time. Coordinated motions by a converter formed by DNA-disengaged RuvB subunits stimulates ATP hydrolysis and nucleotide exchange. Immobilization of the converter enables RuvB to convert the ATP-contained energy into a lever motion, pulling 2 nucleotides of DNA out of the RuvA tetramer per ATP hydrolyzed, thus driving DNA branch migration. The RuvB motors rotate together with the DNA substrate, which together with the progressing nucleotide cycle form the mechanistic basis for DNA recombination by continuous HJ branch migration. Branch migration allows RuvC to scan DNA until it finds its consensus sequence, where it cleaves and resolves cruciform DNA. This chain is Holliday junction branch migration complex subunit RuvB, found in Pseudarthrobacter chlorophenolicus (strain ATCC 700700 / DSM 12829 / CIP 107037 / JCM 12360 / KCTC 9906 / NCIMB 13794 / A6) (Arthrobacter chlorophenolicus).